The primary structure comprises 578 residues: Arginine--tRNA ligase (578 aa).

The short motif at 125–135 (PNVAKKMHVGH) is the 'HIGH' region element.

This sequence belongs to the class-I aminoacyl-tRNA synthetase family. In terms of assembly, monomer.

The protein localises to the cytoplasm. It carries out the reaction tRNA(Arg) + L-arginine + ATP = L-arginyl-tRNA(Arg) + AMP + diphosphate. The protein is Arginine--tRNA ligase of Buchnera aphidicola subsp. Baizongia pistaciae (strain Bp).